Here is a 411-residue protein sequence, read N- to C-terminus: Multidrug resistance protein MdtH (411 aa).

11 consecutive transmembrane segments (helical) span residues 13–33 (YFLLMDNILVVMGFYMVFPLI), 45–65 (ALLVGIALGLRQFIQQGLGIF), 73–95 (LGAKPMIITGMLMRALGFIFMGI), 99–116 (PWLLWVSCILSALGGTLF), 139–159 (LLMIQDSTCAMVGALLGSWLL), 165–185 (LVCLAGALLFLFAAILNAWLL), 213–233 (YVFTLTGYYILSVQVMLILPI), 243–263 (AAVRWTYAIEAALSLSLLYPI), 288–308 (IIPIGMIHNLQVLFLLIGIFY), 340–360 (LGLALGGAIGYSGGGWLYDMG), and 365–385 (IPQLPWVMLGMIGLITLLGFY).

This sequence belongs to the major facilitator superfamily. DHA1 family. MdtH (TC 2.A.1.2.21) subfamily.

The protein localises to the cell membrane. The chain is Multidrug resistance protein MdtH from Baumannia cicadellinicola subsp. Homalodisca coagulata.